A 501-amino-acid polypeptide reads, in one-letter code: Pyruvate kinase (501 aa).

Position 50 (arginine 50) interacts with substrate. Positions 52, 54, 85, and 86 each coordinate K(+). 52–55 (NFSH) contributes to the ATP binding site. The ATP site is built by arginine 92 and lysine 178. Mg(2+) is bound at residue glutamate 243. Substrate contacts are provided by glycine 266, aspartate 267, and threonine 299. Aspartate 267 contacts Mg(2+).

The protein belongs to the pyruvate kinase family. As to quaternary structure, homotetramer. Requires Mg(2+) as cofactor. It depends on K(+) as a cofactor.

The enzyme catalyses pyruvate + ATP = phosphoenolpyruvate + ADP + H(+). It participates in carbohydrate degradation; glycolysis; pyruvate from D-glyceraldehyde 3-phosphate: step 5/5. This chain is Pyruvate kinase (PYK1), found in Naumovozyma castellii (Yeast).